The chain runs to 2322 residues: Protein sidekick homolog (2322 aa).

A signal peptide spans 1–26 (MNYRIFLLFCTTTVLWSVVSTQLVLG). Topologically, residues 27–2020 (KPPIFQNTGP…IPDDPFYTTW (1994 aa)) are extracellular. 3 consecutive Ig-like C2-type domains span residues 28–105 (PPIF…AAIS), 217–319 (PSLQ…AYLT), and 324–397 (PVLK…ADMS). Cystine bridges form between Cys-52–Cys-94, Cys-247–Cys-301, and Cys-345–Cys-386. Asn-408 carries an N-linked (GlcNAc...) asparagine glycan. 2 Ig-like C2-type domains span residues 450 to 545 (PFTS…VQVN) and 548 to 639 (SLIE…AMLQ). 2 disulfides stabilise this stretch: Cys-481-Cys-529 and Cys-569-Cys-623. N-linked (GlcNAc...) asparagine glycans are attached at residues Asn-633 and Asn-656. 13 consecutive Fibronectin type-III domains span residues 646–752 (MPER…MPQQ), 757–854 (APRN…TAEG), 859–958 (APKN…TEED), 962–1056 (AVDE…VPPE), 1060–1155 (RPSM…TLQT), 1160–1255 (PSQR…TYES), 1260–1360 (SPRN…TLED), 1364–1458 (PPES…SSVR), 1464–1567 (APAP…TLPS), 1572–1672 (QPIS…VGYS), 1674–1774 (PKRN…LEDK), 1777–1873 (PVGV…SKDG), and 1908–2010 (QAKR…VPES). The tract at residues 732–762 (SNKHGPGKPSLPSSSVTMPQQPPSAAPRNVA) is disordered. Asn-808, Asn-869, Asn-933, and Asn-1017 each carry an N-linked (GlcNAc...) asparagine glycan. Residues 1040–1049 (GDGPVEETKF) are compositionally biased toward basic and acidic residues. The interval 1040–1060 (GDGPVEETKFESGVPPELPGR) is disordered. An N-linked (GlcNAc...) asparagine glycan is attached at Asn-1108. Residues 1139–1163 (GRGAPSEPSRTFETLQTNPETPSQR) form a disordered region. Over residues 1146-1163 (PSRTFETLQTNPETPSQR) the composition is skewed to polar residues. Asn-1615, Asn-1677, and Asn-1864 each carry an N-linked (GlcNAc...) asparagine glycan. Residues 1916-1965 (EETENGYVSQRPRRNEIRGAKSAAQTSASSNSNRPTHPIGEWITLRPTDG) form a disordered region. The segment covering 1935–1947 (AKSAAQTSASSNS) has biased composition (low complexity). A helical membrane pass occupies residues 2021–2041 (WFMALVAMAAFVLIVIIIAIL). Topologically, residues 2042–2322 (CVTGSSAKYR…NLTAGFSSFV (281 aa)) are cytoplasmic. 3 disordered regions span residues 2081 to 2114 (NMTR…SVLG), 2167 to 2254 (YVVS…ADDI), and 2276 to 2322 (MVRA…SSFV). Residues 2092 to 2101 (PGTTQSWLSD) are compositionally biased toward polar residues. Residues 2207-2223 (PSSSGGSQPQGSPQQQQ) show a composition bias toward low complexity. Positions 2227–2238 (DSFDEEDDVDDD) are enriched in acidic residues. Composition is skewed to polar residues over residues 2282–2302 (LTNQ…STSE) and 2310–2322 (ATPN…SSFV).

Belongs to the sidekick family.

It localises to the membrane. Its function is as follows. Cell adhesion protein. The sequence is that of Protein sidekick homolog (rig-4) from Caenorhabditis briggsae.